The sequence spans 240 residues: RNA-free ribonuclease P (240 aa).

This sequence belongs to the HARP family.

The enzyme catalyses Endonucleolytic cleavage of RNA, removing 5'-extranucleotides from tRNA precursor.. RNA-free RNase P that catalyzes the removal of the 5'-leader sequence from pre-tRNA to produce the mature 5'-terminus. The sequence is that of RNA-free ribonuclease P from Methanococcus aeolicus (strain ATCC BAA-1280 / DSM 17508 / OCM 812 / Nankai-3).